Reading from the N-terminus, the 177-residue chain is Superoxide dismutase [Cu-Zn] 1 (177 aa).

The N-terminal stretch at 1–20 (MKYTILSLVAGALISCSAMA) is a signal peptide. Residues His69, His71, and His94 each contribute to the Cu cation site. Cys76 and Cys172 are oxidised to a cystine. Residues His94, His103, His112, and Asp115 each contribute to the Zn(2+) site. Residue His150 participates in Cu cation binding.

This sequence belongs to the Cu-Zn superoxide dismutase family. In terms of assembly, monomer. The cofactor is Cu cation. Requires Zn(2+) as cofactor.

It is found in the periplasm. The catalysed reaction is 2 superoxide + 2 H(+) = H2O2 + O2. In terms of biological role, destroys radicals which are normally produced within the cells and which are toxic to biological systems. This chain is Superoxide dismutase [Cu-Zn] 1 (sodC1), found in Salmonella typhimurium (strain 4/74).